Here is a 464-residue protein sequence, read N- to C-terminus: Cysteine--tRNA ligase (464 aa).

C32 contacts Zn(2+). The 'HIGH' region motif lies at 34-44 (VTVYDDCHIGH). Positions 213, 238, and 242 each coordinate Zn(2+). The 'KMSKS' region motif lies at 270–274 (KMSKS). K273 contacts ATP.

This sequence belongs to the class-I aminoacyl-tRNA synthetase family. In terms of assembly, monomer. Zn(2+) is required as a cofactor.

The protein localises to the cytoplasm. The enzyme catalyses tRNA(Cys) + L-cysteine + ATP = L-cysteinyl-tRNA(Cys) + AMP + diphosphate. The chain is Cysteine--tRNA ligase from Francisella tularensis subsp. tularensis (strain SCHU S4 / Schu 4).